Consider the following 188-residue polypeptide: HGPRTase-like protein (188 aa).

Belongs to the purine/pyrimidine phosphoribosyltransferase family. Archaeal HPRT subfamily.

May catalyze a purine salvage reaction, the substrate is unknown. In Halobacterium salinarum (strain ATCC 29341 / DSM 671 / R1), this protein is HGPRTase-like protein.